The sequence spans 532 residues: E3 ubiquitin-protein ligase rnf8-B (532 aa).

Positions Val-30–Leu-84 constitute an FHA domain. The segment at Ser-127–Gln-209 is disordered. The segment covering Val-169 to Lys-178 has biased composition (basic and acidic residues). The RING-type zinc finger occupies Cys-377 to Arg-415.

This sequence belongs to the RNF8 family. In terms of assembly, homodimer. Forms a E2-E3 ubiquitin ligase complex composed of the rnf8 homodimer and a E2 heterodimer of ube2n and ube2v2.

It localises to the nucleus. The catalysed reaction is S-ubiquitinyl-[E2 ubiquitin-conjugating enzyme]-L-cysteine + [acceptor protein]-L-lysine = [E2 ubiquitin-conjugating enzyme]-L-cysteine + N(6)-ubiquitinyl-[acceptor protein]-L-lysine.. It participates in protein modification; protein ubiquitination. Functionally, E3 ubiquitin-protein ligase that plays a key role in DNA damage signaling via 2 distinct roles: by mediating the 'Lys-63'-linked ubiquitination of histones H2A and H2AX and promoting the recruitment of DNA repair proteins at double-strand breaks (DSBs) sites, and by catalyzing 'Lys-48'-linked ubiquitination to remove target proteins from DNA damage sites. Following DNA DSBs, it is recruited to the sites of damage by ATM-phosphorylated mdc1 and catalyzes the 'Lys-63'-linked ubiquitination of histones H2A and H2AX, thereby promoting the formation of tp53bp1 and brca1 ionizing radiation-induced foci (IRIF). H2A ubiquitination also mediates the ATM-dependent transcriptional silencing at regions flanking DSBs in cis, a mechanism to avoid collision between transcription and repair intermediates. Also catalyzes the formation of 'Lys-48'-linked polyubiquitin chains, leading to degradation of substrate proteins. In addition to its function in damage signaling, also plays a role in higher-order chromatin structure by mediating extensive chromatin decondensation. The polypeptide is E3 ubiquitin-protein ligase rnf8-B (Xenopus laevis (African clawed frog)).